A 435-amino-acid chain; its full sequence is 3-ketoacyl-CoA thiolase (435 aa).

Catalysis depends on cysteine 98, which acts as the Acyl-thioester intermediate. Residues histidine 391 and cysteine 421 each act as proton acceptor in the active site.

This sequence belongs to the thiolase-like superfamily. Thiolase family. As to quaternary structure, heterotetramer of two alpha chains (FadJ) and two beta chains (FadI).

The protein localises to the cytoplasm. It carries out the reaction an acyl-CoA + acetyl-CoA = a 3-oxoacyl-CoA + CoA. The protein operates within lipid metabolism; fatty acid beta-oxidation. Its function is as follows. Catalyzes the final step of fatty acid oxidation in which acetyl-CoA is released and the CoA ester of a fatty acid two carbons shorter is formed. The chain is 3-ketoacyl-CoA thiolase from Vibrio cholerae serotype O1 (strain ATCC 39541 / Classical Ogawa 395 / O395).